The chain runs to 142 residues: MKQETPITLHVKSVIEDDGNQEVIEFRTTGFYYVKQNKVYLSYYEEHDLGKVKTIVKVSEGEVLVMRSGAVKMNQRFVTGASTIAKYKMSFGELELKTSTKSIQSDLDEEKGRISIAYDMHVGDEQEHLHNMTITYEGGTHA.

As to quaternary structure, homodimer.

This is an uncharacterized protein from Bacillus subtilis (strain 168).